Here is a 781-residue protein sequence, read N- to C-terminus: uncharacterized protein (781 aa).

Residues 1-34 form a disordered region; the sequence is MNIAEEPSDEVISSGPEDTDICSQQTSASAEAGD. S29 carries the phosphoserine modification. 2 consecutive RRM domains span residues 195-273 and 295-418; these read GNIF…YHVE and RCLF…KAVQ. The disordered stretch occupies residues 345–375; sequence SNTRSSSSVSFNEEGSVESNKSSNNTNGNAQ. Positions 347 to 364 are enriched in low complexity; sequence TRSSSSVSFNEEGSVESN. Over residues 365 to 374 the composition is skewed to polar residues; it reads KSSNNTNGNA. A phosphoserine mark is found at S433, S435, S482, and S485. A Phosphothreonine modification is found at T486. The residue at position 501 (S501) is a Phosphoserine. Residues 540–638 enclose the RRM 3 domain; that stretch reads SNLYVKHIPL…QVLSVSFAQK (99 aa). The disordered stretch occupies residues 640–668; it reads GNLSSSDDDDQSQTDNSSKFQNFQPHNDY.

As to quaternary structure, interacts with RBG1.

This is an uncharacterized protein from Saccharomyces cerevisiae (strain ATCC 204508 / S288c) (Baker's yeast).